The primary structure comprises 725 residues: Glutamine-dependent NAD(+) synthetase (725 aa).

Residues 5-275 form the CN hydrolase domain; the sequence is VTVATCALNQ…VEVLTATLDL (271 aa). Residue Glu-45 is the Proton acceptor; for glutaminase activity of the active site. Residue Lys-114 is the For glutaminase activity of the active site. Cys-175 (nucleophile; for glutaminase activity) is an active-site residue. The tract at residues 325–706 is ligase; that stretch reads YHRPEEEISL…KTSQTLEEQI (382 aa). Position 355-362 (355-362) interacts with ATP; that stretch reads PLSGGVDS. Ser-357 is an active-site residue.

The protein in the C-terminal section; belongs to the NAD synthetase family. As to quaternary structure, homohexamer.

The catalysed reaction is deamido-NAD(+) + L-glutamine + ATP + H2O = L-glutamate + AMP + diphosphate + NAD(+) + H(+). Its pathway is cofactor biosynthesis; NAD(+) biosynthesis; NAD(+) from deamido-NAD(+) (L-Gln route): step 1/1. Functionally, catalyzes the final step of the nicotinamide adenine dinucleotide (NAD) de novo synthesis pathway, the ATP-dependent amidation of deamido-NAD using L-glutamine as a nitrogen source. In Rattus norvegicus (Rat), this protein is Glutamine-dependent NAD(+) synthetase (Nadsyn1).